The following is a 213-amino-acid chain: Phosphoheptose isomerase (213 aa).

The 159-residue stretch at 50–208 (MAETFEGGGR…IDLVERMLGY (159 aa)) folds into the SIS domain. 65 to 67 (NGG) is a binding site for substrate. 2 residues coordinate Zn(2+): His-74 and Glu-78. Substrate-binding positions include Glu-78, 109 to 110 (ND), 135 to 137 (STS), Ser-140, and Gln-188. Zn(2+) contacts are provided by Gln-188 and His-196.

This sequence belongs to the SIS family. GmhA subfamily. It depends on Zn(2+) as a cofactor.

It localises to the cytoplasm. It catalyses the reaction 2 D-sedoheptulose 7-phosphate = D-glycero-alpha-D-manno-heptose 7-phosphate + D-glycero-beta-D-manno-heptose 7-phosphate. The protein operates within carbohydrate biosynthesis; D-glycero-D-manno-heptose 7-phosphate biosynthesis; D-glycero-alpha-D-manno-heptose 7-phosphate and D-glycero-beta-D-manno-heptose 7-phosphate from sedoheptulose 7-phosphate: step 1/1. Functionally, catalyzes the isomerization of sedoheptulose 7-phosphate in D-glycero-D-manno-heptose 7-phosphate. The chain is Phosphoheptose isomerase from Chlorobium phaeovibrioides (strain DSM 265 / 1930) (Prosthecochloris vibrioformis (strain DSM 265)).